A 417-amino-acid chain; its full sequence is Multifunctional CCA protein (417 aa).

Residues glycine 8 and arginine 11 each coordinate ATP. CTP is bound by residues glycine 8 and arginine 11. Aspartate 21 and aspartate 23 together coordinate Mg(2+). Residues arginine 91, arginine 137, and arginine 140 each contribute to the ATP site. 3 residues coordinate CTP: arginine 91, arginine 137, and arginine 140. One can recognise an HD domain in the interval 225–326; the sequence is SGIHTLMTLQ…LNVLKKTDAF (102 aa).

Belongs to the tRNA nucleotidyltransferase/poly(A) polymerase family. Bacterial CCA-adding enzyme type 1 subfamily. As to quaternary structure, monomer. Can also form homodimers and oligomers. The cofactor is Mg(2+). Ni(2+) is required as a cofactor.

It carries out the reaction a tRNA precursor + 2 CTP + ATP = a tRNA with a 3' CCA end + 3 diphosphate. The enzyme catalyses a tRNA with a 3' CCA end + 2 CTP + ATP = a tRNA with a 3' CCACCA end + 3 diphosphate. Functionally, catalyzes the addition and repair of the essential 3'-terminal CCA sequence in tRNAs without using a nucleic acid template. Adds these three nucleotides in the order of C, C, and A to the tRNA nucleotide-73, using CTP and ATP as substrates and producing inorganic pyrophosphate. tRNA 3'-terminal CCA addition is required both for tRNA processing and repair. Also involved in tRNA surveillance by mediating tandem CCA addition to generate a CCACCA at the 3' terminus of unstable tRNAs. While stable tRNAs receive only 3'-terminal CCA, unstable tRNAs are marked with CCACCA and rapidly degraded. The chain is Multifunctional CCA protein from Neisseria meningitidis serogroup B (strain ATCC BAA-335 / MC58).